Consider the following 299-residue polypeptide: Type II restriction enzyme BglI (299 aa).

The Mg(2+) site is built by aspartate 116, aspartate 142, and isoleucine 143.

In terms of assembly, homodimer. Mg(2+) is required as a cofactor.

It catalyses the reaction Endonucleolytic cleavage of DNA to give specific double-stranded fragments with terminal 5'-phosphates.. Functionally, a P subtype restriction enzyme that recognizes the double-stranded sequence 5'-GCCNNNNNGGC-3' and cleaves before N-8. The sequence is that of Type II restriction enzyme BglI (bglIR) from Bacillus subtilis.